A 423-amino-acid polypeptide reads, in one-letter code: Elongation factor 1-alpha (423 aa).

Positions 5-221 (KEHINVAFIG…DLLKPPEKLV (217 aa)) constitute a tr-type G domain. A G1 region spans residues 14–21 (GHVDHGKS). 14 to 21 (GHVDHGKS) contributes to the GTP binding site. Serine 21 provides a ligand contact to Mg(2+). The interval 70-74 (GVTID) is G2. Residues 91–94 (DCPG) are G3. GTP contacts are provided by residues 91–95 (DCPGH) and 146–149 (NKMD). A G4 region spans residues 146-149 (NKMD). Residues 185–187 (SAY) form a G5 region.

This sequence belongs to the TRAFAC class translation factor GTPase superfamily. Classic translation factor GTPase family. EF-Tu/EF-1A subfamily.

It is found in the cytoplasm. The enzyme catalyses GTP + H2O = GDP + phosphate + H(+). GTP hydrolase that promotes the GTP-dependent binding of aminoacyl-tRNA to the A-site of ribosomes during protein biosynthesis. The protein is Elongation factor 1-alpha of Archaeoglobus fulgidus (strain ATCC 49558 / DSM 4304 / JCM 9628 / NBRC 100126 / VC-16).